The sequence spans 198 residues: Recombination protein RecR (198 aa).

Residues 57–72 (CSVCGHITDQDPCYIC) form a C4-type zinc finger. Residues 80-175 (SVICVVQDPK…KLSRIAHGLP (96 aa)) enclose the Toprim domain.

It belongs to the RecR family.

Functionally, may play a role in DNA repair. It seems to be involved in an RecBC-independent recombinational process of DNA repair. It may act with RecF and RecO. The polypeptide is Recombination protein RecR (Bacillus subtilis (strain 168)).